The chain runs to 310 residues: Nucleotide-binding protein Mmc1_3333 (310 aa).

Position 19 to 26 (19 to 26 (GLSGAGKS)) interacts with ATP.

The protein belongs to the RapZ-like family.

In terms of biological role, displays ATPase and GTPase activities. In Magnetococcus marinus (strain ATCC BAA-1437 / JCM 17883 / MC-1), this protein is Nucleotide-binding protein Mmc1_3333.